A 504-amino-acid chain; its full sequence is Maturase K (504 aa).

It belongs to the intron maturase 2 family. MatK subfamily.

It localises to the plastid. It is found in the chloroplast. Its function is as follows. Usually encoded in the trnK tRNA gene intron. Probably assists in splicing its own and other chloroplast group II introns. This chain is Maturase K, found in Mentzelia laevicaulis (Blazing star).